Reading from the N-terminus, the 692-residue chain is uncharacterized protein (692 aa).

2 consecutive Response regulatory domains span residues 9–130 (RVLY…LRMC) and 139–255 (RILI…EYRM). Residues Asp-58 and Asp-188 each carry the 4-aspartylphosphate modification. In terms of domain architecture, GGDEF spans 299 to 432 (GVHGLVIIDV…GGNQAHVWSA (134 aa)). The EAL domain occupies 443–691 (ESVIKRLVST…SFDFQHMSHD (249 aa)).

This is an uncharacterized protein from Thiocystis violacea.